The sequence spans 459 residues: Ribulose bisphosphate carboxylase (459 aa).

Position 111 (asparagine 111) interacts with substrate. Lysine 166 (proton acceptor) is an active-site residue. Substrate is bound at residue lysine 168. Residues lysine 191, aspartate 193, and glutamate 194 each contribute to the Mg(2+) site. The residue at position 191 (lysine 191) is an N6-carboxylysine. The active-site Proton acceptor is histidine 287. Substrate-binding residues include arginine 288, histidine 321, and serine 368.

This sequence belongs to the RuBisCO large chain family. Type II subfamily. As to quaternary structure, homodimer. It depends on Mg(2+) as a cofactor.

The protein localises to the cytoplasm. The catalysed reaction is 2 (2R)-3-phosphoglycerate + 2 H(+) = D-ribulose 1,5-bisphosphate + CO2 + H2O. It carries out the reaction D-ribulose 1,5-bisphosphate + O2 = 2-phosphoglycolate + (2R)-3-phosphoglycerate + 2 H(+). Functionally, ruBisCO catalyzes two reactions: the carboxylation of D-ribulose 1,5-bisphosphate, the primary event in carbon dioxide fixation, as well as the oxidative fragmentation of the pentose substrate. Both reactions occur simultaneously and in competition at the same active site. The polypeptide is Ribulose bisphosphate carboxylase (Halothiobacillus neapolitanus (strain ATCC 23641 / c2) (Thiobacillus neapolitanus)).